A 583-amino-acid chain; its full sequence is 2-succinyl-5-enolpyruvyl-6-hydroxy-3-cyclohexene-1-carboxylate synthase (583 aa).

The protein belongs to the TPP enzyme family. MenD subfamily. In terms of assembly, homodimer. Mg(2+) serves as cofactor. Mn(2+) is required as a cofactor. The cofactor is thiamine diphosphate.

It carries out the reaction isochorismate + 2-oxoglutarate + H(+) = 5-enolpyruvoyl-6-hydroxy-2-succinyl-cyclohex-3-ene-1-carboxylate + CO2. It participates in quinol/quinone metabolism; 1,4-dihydroxy-2-naphthoate biosynthesis; 1,4-dihydroxy-2-naphthoate from chorismate: step 2/7. It functions in the pathway quinol/quinone metabolism; menaquinone biosynthesis. In terms of biological role, catalyzes the thiamine diphosphate-dependent decarboxylation of 2-oxoglutarate and the subsequent addition of the resulting succinic semialdehyde-thiamine pyrophosphate anion to isochorismate to yield 2-succinyl-5-enolpyruvyl-6-hydroxy-3-cyclohexene-1-carboxylate (SEPHCHC). The chain is 2-succinyl-5-enolpyruvyl-6-hydroxy-3-cyclohexene-1-carboxylate synthase from Chlorobium luteolum (strain DSM 273 / BCRC 81028 / 2530) (Pelodictyon luteolum).